A 426-amino-acid polypeptide reads, in one-letter code: 3-phosphoshikimate 1-carboxyvinyltransferase (426 aa).

Lys22, Ser23, and Arg27 together coordinate 3-phosphoshikimate. Position 22 (Lys22) interacts with phosphoenolpyruvate. Residues Gly96 and Arg124 each coordinate phosphoenolpyruvate. 3-phosphoshikimate-binding residues include Ser170, Ser171, Gln172, Ser198, Asp314, Asn337, and Lys341. Gln172 contacts phosphoenolpyruvate. The active-site Proton acceptor is the Asp314. Residues Arg345, Arg387, and Lys412 each coordinate phosphoenolpyruvate.

This sequence belongs to the EPSP synthase family. Monomer.

The protein resides in the cytoplasm. It carries out the reaction 3-phosphoshikimate + phosphoenolpyruvate = 5-O-(1-carboxyvinyl)-3-phosphoshikimate + phosphate. The protein operates within metabolic intermediate biosynthesis; chorismate biosynthesis; chorismate from D-erythrose 4-phosphate and phosphoenolpyruvate: step 6/7. In terms of biological role, catalyzes the transfer of the enolpyruvyl moiety of phosphoenolpyruvate (PEP) to the 5-hydroxyl of shikimate-3-phosphate (S3P) to produce enolpyruvyl shikimate-3-phosphate and inorganic phosphate. In Shewanella halifaxensis (strain HAW-EB4), this protein is 3-phosphoshikimate 1-carboxyvinyltransferase.